The chain runs to 819 residues: Phenylalanine--tRNA ligase beta subunit (819 aa).

One can recognise a tRNA-binding domain in the interval 42–154; the sequence is RGGLRGLVIG…SDAPVGMPAA (113 aa). The B5 domain maps to 412 to 488; it reads LKPHLISLSF…RIYGYNQVEL (77 aa). Mg(2+) contacts are provided by Asp466, Asp472, Glu475, and Glu476. Positions 726-819 constitute an FDX-ACB domain; the sequence is PRFPEVKRDL…LEQKLGAQLR (94 aa).

This sequence belongs to the phenylalanyl-tRNA synthetase beta subunit family. Type 1 subfamily. In terms of assembly, tetramer of two alpha and two beta subunits. The cofactor is Mg(2+).

The protein resides in the cytoplasm. It carries out the reaction tRNA(Phe) + L-phenylalanine + ATP = L-phenylalanyl-tRNA(Phe) + AMP + diphosphate + H(+). This is Phenylalanine--tRNA ligase beta subunit from Porphyromonas gingivalis (strain ATCC BAA-308 / W83).